Reading from the N-terminus, the 748-residue chain is Antigen peptide transporter 1 (748 aa).

Topologically, residues 1-15 (MASSRCPAPRGCRCL) are cytoplasmic. The helical transmembrane segment at 16-36 (PGASLAWLGTVLLLLADWVLL) threads the bilayer. Over 37–53 (RTALPRIFSLLVPTALP) the chain is Lumenal. A helical membrane pass occupies residues 54–76 (LLRVWAVGLSRWAVLWLGACGVL). The Cytoplasmic segment spans residues 77–92 (RATVGSKSENAGAQGW). Residues 93–113 (LAALKPLAAALGLALPGLALF) traverse the membrane as a helical segment. Topologically, residues 114–133 (RELISWGAPGSADSTRLLHW) are lumenal. The chain crosses the membrane as a helical span at residues 134–154 (GSHPTAFVVSYAAALPAAALW). Residues 155-186 (HKLGSLWVPGGQGGSGNPVRRLLGCLGSETRR) lie on the Cytoplasmic side of the membrane. Residues 187 to 207 (LSLFLVLVVLSSLGEMAIPFF) traverse the membrane as a helical segment. The ABC transmembrane type-1 domain occupies 187–470 (LSLFLVLVVL…LLSIYPRVQK (284 aa)). The Lumenal segment spans residues 208 to 227 (TGRLTDWILQDGSADTFTRN). Residues 228–248 (LTLMSILTIASAVLEFVGDGI) form a helical membrane-spanning segment. The Cytoplasmic portion of the chain corresponds to 249–298 (YNNTMGHVHSHLQGEVFGAVLRQETEFFQQNQTGNIMSRVTEDTSTLSDS). Residues 299–319 (LSENLSLFLWYLVRGLCLLGI) traverse the membrane as a helical segment. The Lumenal segment spans residues 320–328 (MLWGSVSLT). The helical transmembrane segment at 329-349 (MVTLITLPLLFLLPKKVGKWY) threads the bilayer. The Cytoplasmic segment spans residues 350–418 (QLLEVQVRES…AVNSWTTSIS (69 aa)). A part of the peptide-binding site region spans residues 375–420 (PTVRSFANEEGEAQKFREKLQEIKTLNQKEAVAYAVNSWTTSISGM). Residues 419-439 (GMLLKVGILYIGGQLVTSGAV) traverse the membrane as a helical segment. Topologically, residues 440–443 (SSGN) are lumenal. Residues 444-464 (LVTFVLYQMQFTQAVEVLLSI) traverse the membrane as a helical segment. A part of the peptide-binding site region spans residues 453–487 (QFTQAVEVLLSIYPRVQKAVGSSEKIFEYLDRTPR). Residues 465 to 748 (YPRVQKAVGS…MVQAPADAPE (284 aa)) lie on the Cytoplasmic side of the membrane. Residues 503–742 (VQFQDVSFAY…KGCYWAMVQA (240 aa)) form the ABC transporter domain. Residues 538-546 (GPNGSGKST), 641-647 (SQLSGGQ), and glutamine 701 each bind ATP. Serine 545 contacts Mg(2+).

Belongs to the ABC transporter superfamily. ABCB family. MHC peptide exporter (TC 3.A.1.209) subfamily. Heterodimer of TAP1 and TAP2 (TAP1-TAP2). A component of the peptide loading complex (PLC), interacts via TAPBP with MHCI heterodimer; this interaction mediates peptide-MHCI assembly. Recruits TAPBP in a 1:1 stoichiometry. Interacts with classical MHCI such as HLA-A*02-B2M; this interaction is obligatory for the loading of peptide epitopes. Interacts with non-classical MHCI molecules including HLA-E-B2M and HLA-F-B2M as well as PLC component CALR before the peptide loading. Interacts with PSMB5 and PSMB8. As to quaternary structure, (Microbial infection) Interacts with Epstein-Barr virus BNLF2a. In terms of assembly, (Microbial infection) Interacts with herpes simplex virus US12/ICP47. (Microbial infection) Interacts with adenovirus E3-19K glycoprotein, which binds TAP1-TAP2 and acts as a TAPBP inhibitor, preventing TAP1-TAP2 association with MHCI. It depends on Mg(2+) as a cofactor. In terms of tissue distribution, highly expressed in professional APCs monocytes and dendritic cells as well as in lymphocyte subsets T cells, B cells and NK cells.

The protein resides in the endoplasmic reticulum membrane. The enzyme catalyses a peptide antigen(in) + ATP + H2O = a peptide antigen(out) + ADP + phosphate + H(+). Its activity is regulated as follows. Inhibited at high ER lumenal peptide concentrations. With respect to regulation, (Microbial infection) Inhibited by herpes simplex virus US12/ICP47 protein, which blocks the peptide-binding site of TAP1-TAP2. (Microbial infection) Inhibited by human cytomegalovirus US6 glycoprotein, which binds to the lumenal side of TAP1-TAP2 complex and inhibits peptide translocation by specifically blocking ATP-binding and preventing TAP1-TAP2 conformational rearrangement induced by peptide binding. Functionally, ABC transporter associated with antigen processing. In complex with TAP2 mediates unidirectional translocation of peptide antigens from cytosol to endoplasmic reticulum (ER) for loading onto MHC class I (MHCI) molecules. Uses the chemical energy of ATP to export peptides against the concentration gradient. During the transport cycle alternates between 'inward-facing' state with peptide binding site facing the cytosol to 'outward-facing' state with peptide binding site facing the ER lumen. Peptide antigen binding to ATP-loaded TAP1-TAP2 induces a switch to hydrolysis-competent 'outward-facing' conformation ready for peptide loading onto nascent MHCI molecules. Subsequently ATP hydrolysis resets the transporter to the 'inward facing' state for a new cycle. Typically transports intracellular peptide antigens of 8 to 13 amino acids that arise from cytosolic proteolysis via IFNG-induced immunoproteasome. Binds peptides with free N- and C-termini, the first three and the C-terminal residues being critical. Preferentially selects peptides having a highly hydrophobic residue at position 3 and hydrophobic or charged residues at the C-terminal anchor. Proline at position 2 has the most destabilizing effect. As a component of the peptide loading complex (PLC), acts as a molecular scaffold essential for peptide-MHCI assembly and antigen presentation. This chain is Antigen peptide transporter 1, found in Homo sapiens (Human).